The following is a 191-amino-acid chain: Protein GrpE (191 aa).

Residues 1–11 (MTDSSNAHEAE) show a composition bias toward basic and acidic residues. 2 disordered regions span residues 1–22 (MTDSSNAHEAENPTVPTPDNEI) and 172–191 (KVSKAPAPQGTEAEIENNNE).

This sequence belongs to the GrpE family. In terms of assembly, homodimer.

The protein localises to the cytoplasm. In terms of biological role, participates actively in the response to hyperosmotic and heat shock by preventing the aggregation of stress-denatured proteins, in association with DnaK and GrpE. It is the nucleotide exchange factor for DnaK and may function as a thermosensor. Unfolded proteins bind initially to DnaJ; upon interaction with the DnaJ-bound protein, DnaK hydrolyzes its bound ATP, resulting in the formation of a stable complex. GrpE releases ADP from DnaK; ATP binding to DnaK triggers the release of the substrate protein, thus completing the reaction cycle. Several rounds of ATP-dependent interactions between DnaJ, DnaK and GrpE are required for fully efficient folding. This chain is Protein GrpE, found in Chlamydia abortus (strain DSM 27085 / S26/3) (Chlamydophila abortus).